We begin with the raw amino-acid sequence, 384 residues long: MLIVADENIPLLDSFFGDIGEIRRVNGRTLTPDQVKDADILLVRSVTRVDRQLLEGTRVRFVGTATIGTDHIDQTWLQEQGIGFAAAPGCNAVSVAEYVLSVLSLYAEKRGIEDWSSLTVGIVGVGNVGGELARMLERLDFTVKLCDPPRQEAEEERAEEFVPLAEALECDVVTLHTPLTRTGDHPTNRMIAGSELAALGQDQLLINAGRGEVIDGEALLARLQQADAPTVVLDVWEHEPRINPDLLDRVWLATPHIAGYSLEGKMQGTEMIYQALCRYLGLPVRKKAGQFLPEPALSKVSFTSSADEDEAVQVALRACYDPRRDDARLRLTMRGNPEERAQAFDRLRRDYPVRRECSSLKVQLKGSSKSIQDSFRAIGFKLKI.

Substrate is bound by residues S45 and T66. Residues D147 and T177 each coordinate NAD(+). Residue R210 is part of the active site. Residue D234 participates in NAD(+) binding. The active site involves E239. The Proton donor role is filled by H256. G259 is a binding site for NAD(+). Y260 serves as a coordination point for substrate.

Belongs to the D-isomer specific 2-hydroxyacid dehydrogenase family. PdxB subfamily. In terms of assembly, homodimer.

It is found in the cytoplasm. It catalyses the reaction 4-phospho-D-erythronate + NAD(+) = (R)-3-hydroxy-2-oxo-4-phosphooxybutanoate + NADH + H(+). Its pathway is cofactor biosynthesis; pyridoxine 5'-phosphate biosynthesis; pyridoxine 5'-phosphate from D-erythrose 4-phosphate: step 2/5. In terms of biological role, catalyzes the oxidation of erythronate-4-phosphate to 3-hydroxy-2-oxo-4-phosphonooxybutanoate. The protein is Erythronate-4-phosphate dehydrogenase of Marinobacter nauticus (strain ATCC 700491 / DSM 11845 / VT8) (Marinobacter aquaeolei).